Here is a 216-residue protein sequence, read N- to C-terminus: Ribosomal RNA large subunit methyltransferase E (216 aa).

Gly60, Trp62, Asp80, Asp96, and Asp121 together coordinate S-adenosyl-L-methionine. Catalysis depends on Lys161, which acts as the Proton acceptor.

It belongs to the class I-like SAM-binding methyltransferase superfamily. RNA methyltransferase RlmE family.

It is found in the cytoplasm. The enzyme catalyses uridine(2552) in 23S rRNA + S-adenosyl-L-methionine = 2'-O-methyluridine(2552) in 23S rRNA + S-adenosyl-L-homocysteine + H(+). Functionally, specifically methylates the uridine in position 2552 of 23S rRNA at the 2'-O position of the ribose in the fully assembled 50S ribosomal subunit. The chain is Ribosomal RNA large subunit methyltransferase E from Pseudomonas fluorescens (strain SBW25).